The primary structure comprises 541 residues: Zinc finger CCHC domain-containing protein 7 (541 aa).

The segment at 111–144 (AEEKTQSPATSHSNKVAQKCKRNNKKPKPEERPG) is disordered. Positions 116–126 (QSPATSHSNKV) are enriched in polar residues. Glycyl lysine isopeptide (Lys-Gly) (interchain with G-Cter in SUMO2) cross-links involve residues K129, K136, K138, K234, and K249. CCHC-type zinc fingers lie at residues 236–253 (VTCR…NCPL), 258–275 (RACC…GCPA), and 299–316 (KRCD…ACPE). Residue K334 forms a Glycyl lysine isopeptide (Lys-Gly) (interchain with G-Cter in SUMO2) linkage. The segment at 343 to 360 (VYCYNCAQKGHYGHECTE) adopts a CCHC-type 4 zinc-finger fold. The tract at residues 394-541 (VKDLKKNGDF…KKKKPKPSGL (148 aa)) is disordered. Residues K408 and K431 each participate in a glycyl lysine isopeptide (Lys-Gly) (interchain with G-Cter in SUMO2) cross-link. Basic residues predominate over residues 418-434 (RRHHDMRKSRSPRKYRR). The span at 435–452 (WPRENKETQKEKTRSREG) shows a compositional bias: basic and acidic residues. K473 is covalently cross-linked (Glycyl lysine isopeptide (Lys-Gly) (interchain with G-Cter in SUMO2)). Over residues 474–486 (PNASGCANNQKPS) the composition is skewed to polar residues. S477 carries the post-translational modification Phosphoserine. Glycyl lysine isopeptide (Lys-Gly) (interchain with G-Cter in SUMO2) cross-links involve residues K484 and K487. The span at 487–497 (KSLHHASHYHR) shows a compositional bias: basic residues. Composition is skewed to basic and acidic residues over residues 498–509 (LREERLLRESKR) and 517–527 (STEDGSHDDLF). K530 is covalently cross-linked (Glycyl lysine isopeptide (Lys-Gly) (interchain with G-Cter in SUMO2)). A compositionally biased stretch (basic residues) spans 530 to 541 (KQKKKKPKPSGL).

Component of a nucleolar TRAMP-like complex, an ATP-dependent exosome regulatory complex consisting of a helicase (MTREX), an oligadenylate polymerase (TENT4B or TENT4A), and a substrate specific RNA-binding factor (ZCCHC7 or ZCCHC8). Several TRAMP-like complexes exist with specific compositions and are associated with nuclear, or nucleolar RNA exosomes.

It localises to the nucleus. The protein localises to the nucleolus. The sequence is that of Zinc finger CCHC domain-containing protein 7 (Zcchc7) from Mus musculus (Mouse).